The primary structure comprises 90 residues: Small ribosomal subunit protein uS15c (90 aa).

The protein belongs to the universal ribosomal protein uS15 family. As to quaternary structure, part of the 30S ribosomal subunit.

It localises to the plastid. It is found in the chloroplast. This is Small ribosomal subunit protein uS15c (rps15) from Platanus occidentalis (Sycamore).